The primary structure comprises 507 residues: RNA-binding protein Nova-1 (507 aa).

A disordered region spans residues Met-1–Thr-44. Positions Lys-27–Asn-43 match the Bipartite nuclear localization signal motif. Residues Gln-49–Ile-116 form the KH 1 domain. The interval Gln-139 to Ala-171 is disordered. Residues Thr-150 to Ser-169 show a composition bias toward low complexity. Phosphoserine is present on Ser-154. KH domains follow at residues Ala-171–Ile-237 and Lys-421–Ile-488. The tract at residues Gly-419–Pro-503 is required for RNA binding.

Interacts with PTBP2; the interaction is direct. Expressed in cerebellum, brain stem, hippocampus, and frontal cortex.

It localises to the nucleus. Its function is as follows. Functions to regulate alternative splicing in neurons by binding pre-mRNA in a sequence-specific manner to activate exon inclusion or exclusion. It binds specifically to the sequences 5'-YCAY-3' and regulates splicing in only a subset of regulated exons. Binding to an exonic 5'-YCAY-3' cluster changes the protein complexes assembled on pre-mRNA, blocking U1 snRNP binding and exon inclusion, whereas binding to an intronic 5'-YCAY-3' cluster enhances spliceosome assembly and exon inclusion. Binding to 5'-YCAY-3' clusters results in a local and asymmetric action to regulate spliceosome assembly and alternative splicing in neurons. Binding to an exonic 5'-YCAY-3' cluster changed the protein complexes assembled on pre-mRNA, blocking U1 snRNP (small nuclear ribonucleoprotein) binding and exon inclusion, whereas binding to an intronic 5'-YCAY-3' cluster enhanced spliceosome assembly and exon inclusion. With NOVA1, they perform unique biological functions in different brain areas and cell types. Autoregulates its own expression by acting as a splicing repressor. Acts to activate the inclusion of exon E3A in the glycine receptor alpha-2 chain and of exon E9 in gamma-aminobutyric-acid receptor gamma-2 subunit via a distal downstream UCAU-rich intronic splicing enhancer. Acts to regulate a novel glycine receptor alpha-2 chain splice variant (alpha-2N) in developing spinal cord. This is RNA-binding protein Nova-1 from Homo sapiens (Human).